The primary structure comprises 107 residues: ATP-dependent Clp protease adapter protein ClpS (107 aa).

This sequence belongs to the ClpS family. As to quaternary structure, binds to the N-terminal domain of the chaperone ClpA.

Involved in the modulation of the specificity of the ClpAP-mediated ATP-dependent protein degradation. This Acinetobacter baylyi (strain ATCC 33305 / BD413 / ADP1) protein is ATP-dependent Clp protease adapter protein ClpS.